The chain runs to 635 residues: Threonine--tRNA ligase (635 aa).

In terms of domain architecture, TGS spans 1–61 (MINISFPDGS…DNDCKFRILT (61 aa)). Positions 242 to 533 (DHRKLGRELD…LIEEYAGRFP (292 aa)) are catalytic. Positions 333, 384, and 510 each coordinate Zn(2+).

This sequence belongs to the class-II aminoacyl-tRNA synthetase family. In terms of assembly, homodimer. Zn(2+) is required as a cofactor.

It is found in the cytoplasm. It carries out the reaction tRNA(Thr) + L-threonine + ATP = L-threonyl-tRNA(Thr) + AMP + diphosphate + H(+). Its function is as follows. Catalyzes the attachment of threonine to tRNA(Thr) in a two-step reaction: L-threonine is first activated by ATP to form Thr-AMP and then transferred to the acceptor end of tRNA(Thr). Also edits incorrectly charged L-seryl-tRNA(Thr). The polypeptide is Threonine--tRNA ligase (Rickettsia rickettsii (strain Sheila Smith)).